A 222-amino-acid chain; its full sequence is Probable transaldolase (222 aa).

Lys91 serves as the catalytic Schiff-base intermediate with substrate.

This sequence belongs to the transaldolase family. Type 3B subfamily.

The protein resides in the cytoplasm. It catalyses the reaction D-sedoheptulose 7-phosphate + D-glyceraldehyde 3-phosphate = D-erythrose 4-phosphate + beta-D-fructose 6-phosphate. It participates in carbohydrate degradation; pentose phosphate pathway; D-glyceraldehyde 3-phosphate and beta-D-fructose 6-phosphate from D-ribose 5-phosphate and D-xylulose 5-phosphate (non-oxidative stage): step 2/3. Functionally, transaldolase is important for the balance of metabolites in the pentose-phosphate pathway. The sequence is that of Probable transaldolase from Chlorobaculum parvum (strain DSM 263 / NCIMB 8327) (Chlorobium vibrioforme subsp. thiosulfatophilum).